A 382-amino-acid polypeptide reads, in one-letter code: Mannitol-1-phosphate 5-dehydrogenase (382 aa).

3–14 contributes to the NAD(+) binding site; that stretch reads AIHFGAGNIGRG.

The protein belongs to the mannitol dehydrogenase family.

The catalysed reaction is D-mannitol 1-phosphate + NAD(+) = beta-D-fructose 6-phosphate + NADH + H(+). The polypeptide is Mannitol-1-phosphate 5-dehydrogenase (Psychromonas ingrahamii (strain DSM 17664 / CCUG 51855 / 37)).